The following is a 277-amino-acid chain: Protein G1-like2 (277 aa).

The segment covering 1–16 (MQGGGGGDSSGGGGGE) has biased composition (gly residues). Disordered regions lie at residues 1 to 28 (MQGG…SQKR), 141 to 203 (RGIA…GHFF), and 225 to 245 (HQVS…TNTG). Basic and acidic residues predominate over residues 19 to 28 (RPSRYESQKR). Positions 22-149 (RYESQKRRDW…ARGIAYEKKR (128 aa)) constitute an ALOG domain. The short motif at 147–151 (KKRRK) is the Nuclear localization signal element. Residues 154–177 (PTSSSSSQAAAAAAAATSPASPAA) are compositionally biased toward low complexity. Positions 178 to 187 (SPTPPPPPPT) are enriched in pro residues.

The protein belongs to the plant homeotic and developmental regulators ALOG protein family.

The protein localises to the nucleus. Functionally, probable transcription regulator that acts as a developmental regulator by promoting cell growth in response to light. This Oryza sativa subsp. japonica (Rice) protein is Protein G1-like2 (G1L2).